Reading from the N-terminus, the 401-residue chain is MRTDYLFTSESVSEGHPDKVSDQISDAIVDLFLSKDPEARIACETLTTTQLVVLAGEIRCKGVYENGEWAPGAQDEIEKTVRDTVKRIGYEQDGFHWERLEFINRLHGQSAHIAQGVDAADNKDEGAGDQGIMFGYATDETPDLMPATLYYSHKILERMAADRHSGAAPFLEPDAKSQVTLRYEGSLPVAATAVVVSTQHAPGYDEGGKEAELHEYVKRVVAEVIPPVLLRETKYYINPTGSFEIGGPDGDAGLTGRKIIVDTYGGAAPHGGGAFSGKDPTKVDRSAAYITRYLAKNVVAAGLATRCTIQIAYAIGVSEPLSLYVDTHETGTVGDDKIEQAILGIAKLGGLTPRAIRTHLGLNKPIYRPTAAYGHFGRKADGDFFPWERLDLVDDLKAAFA.

An ATP-binding site is contributed by histidine 16. Aspartate 18 is a Mg(2+) binding site. Glutamate 44 contributes to the K(+) binding site. Glutamate 57 and glutamine 109 together coordinate L-methionine. The tract at residues 109–119 is flexible loop; the sequence is QSAHIAQGVDA. ATP is bound by residues 174-176, aspartate 251, 257-258, alanine 274, and lysine 278; these read DAK and RK. Aspartate 251 is a binding site for L-methionine. An L-methionine-binding site is contributed by lysine 282.

Belongs to the AdoMet synthase family. In terms of assembly, homotetramer; dimer of dimers. The cofactor is Mg(2+). Requires K(+) as cofactor.

It localises to the cytoplasm. The catalysed reaction is L-methionine + ATP + H2O = S-adenosyl-L-methionine + phosphate + diphosphate. It functions in the pathway amino-acid biosynthesis; S-adenosyl-L-methionine biosynthesis; S-adenosyl-L-methionine from L-methionine: step 1/1. Its function is as follows. Catalyzes the formation of S-adenosylmethionine (AdoMet) from methionine and ATP. The overall synthetic reaction is composed of two sequential steps, AdoMet formation and the subsequent tripolyphosphate hydrolysis which occurs prior to release of AdoMet from the enzyme. In Novosphingobium aromaticivorans (strain ATCC 700278 / DSM 12444 / CCUG 56034 / CIP 105152 / NBRC 16084 / F199), this protein is S-adenosylmethionine synthase.